The chain runs to 219 residues: Claudin-20 (219 aa).

Topologically, residues 1–7 (MASAGLQ) are cytoplasmic. The chain crosses the membrane as a helical span at residues 8-28 (LLAFILALSGVSGVLTATLLP). The Extracellular segment spans residues 29-81 (NWKVNVDVDSNIITAIVQLHGLWMDCTWYSTGMFSCALKHSILSLPIHVQAAR). A helical membrane pass occupies residues 82 to 102 (ATMVLACVLSALGICTSTVGM). The Cytoplasmic portion of the chain corresponds to 103 to 118 (KCTRLGGDRETKSHAS). A helical transmembrane segment spans residues 119–139 (FAGGVCFMSAGISSLISTVWY). Topologically, residues 140–160 (TKEIIANFLDLTVPESNKHEP) are extracellular. A helical membrane pass occupies residues 161–181 (GGAIYIGFISAMLLFISGMIF). The Cytoplasmic portion of the chain corresponds to 182-219 (CTSCIKRNPEARLDPPTQQPISNTQLENNSTHNLKDYV). The interval 193–219 (RLDPPTQQPISNTQLENNSTHNLKDYV) is disordered. Residues 200–213 (QPISNTQLENNSTH) show a composition bias toward polar residues.

Belongs to the claudin family.

The protein localises to the cell junction. It localises to the tight junction. It is found in the cell membrane. Functionally, plays a major role in tight junction-specific obliteration of the intercellular space, through calcium-independent cell-adhesion activity. This is Claudin-20 (CLDN20) from Homo sapiens (Human).